The primary structure comprises 225 residues: Holliday junction branch migration complex subunit RuvA (225 aa).

The domain I stretch occupies residues 1–68; sequence MIGWLQGQKV…DDGSSLFGFP (68 aa). Residues 69 to 147 are domain II; sequence ERRERDMFRT…EFSCRDPGMS (79 aa). Residues 148 to 158 form a flexible linker region; the sequence is LVDNGVIDSHQ. A domain III region spans residues 159-225; sequence LKDSSLHELQ…SLRWLSQEAA (67 aa).

Belongs to the RuvA family. As to quaternary structure, homotetramer. Forms an RuvA(8)-RuvB(12)-Holliday junction (HJ) complex. HJ DNA is sandwiched between 2 RuvA tetramers; dsDNA enters through RuvA and exits via RuvB. An RuvB hexamer assembles on each DNA strand where it exits the tetramer. Each RuvB hexamer is contacted by two RuvA subunits (via domain III) on 2 adjacent RuvB subunits; this complex drives branch migration. In the full resolvosome a probable DNA-RuvA(4)-RuvB(12)-RuvC(2) complex forms which resolves the HJ.

Its subcellular location is the cytoplasm. In terms of biological role, the RuvA-RuvB-RuvC complex processes Holliday junction (HJ) DNA during genetic recombination and DNA repair, while the RuvA-RuvB complex plays an important role in the rescue of blocked DNA replication forks via replication fork reversal (RFR). RuvA specifically binds to HJ cruciform DNA, conferring on it an open structure. The RuvB hexamer acts as an ATP-dependent pump, pulling dsDNA into and through the RuvAB complex. HJ branch migration allows RuvC to scan DNA until it finds its consensus sequence, where it cleaves and resolves the cruciform DNA. The protein is Holliday junction branch migration complex subunit RuvA of Prochlorococcus marinus (strain MIT 9313).